The sequence spans 1313 residues: MSRSSGASFAQFFPAAPRAARDRATERERARMRAQASPPTQPLDTNGHRTPLSSFTSNRSDDGASPGRSHITSLNHSSSAGADATRPPLEDTESLPGDTLNTVGSASSHTSTSSSIFSSSTRQPAMASASVRNSHTHNSTTPLTTAGSPSSLYLSTSLHAKPHSVSPHHADKQNGLTPTLNGSATDSLVPLPDGTERVPPRDPSRSVLCTICTYDPLLDKKLSSSEKKKAKPIYKDYGLNDEDDAPPSDPRLAHGGKLSYINVNFHLPKAQLIDAPSNLKPYPYDPKTSCGPGPPVQILVRGFNPLIAFTKVTTIFASFGDIAESSNKMHPETGSYLGFATIRYKDSKPTSSRPVPVPAHQAARRAVRGMHGRRIEANQVRVEFDPEGRKSKALMEAVLKKSRETSQTPNAAYKIPTGPKPRAGEVIPGPPPTAPKGPAAHRALGGSEAGWTSTKPRHPNIIETEPIVNHIKSEPYIFVAHEYVPVMPTTVAHMKKRLKQYGFDDIRADRTGYYIIFRDSHYGRDEASKCYNSANDTAFFTYSMVMDLHLFGTVGKSSRSSEDHRRHSYGSEKRPPPEHRQRDDQDRRRRDEEADIEEEKKQRAKNLDPVKEAAEVIRREMTEHLLKTIRTKITLPAVFDYLNPVNHAAKRRKLNIDDSHSGTIPSIVFDDSEGRSSPVGTPNSRADPIERRTARADVSTLRVRKLKSRGVNARKHGFNDPFARARPTQRVDLRSLHHRLNSDSDDDSDDGVDNRYSMIRDTEEPESRPRSRVSSEEDRNKEETGSWVAGEDDSMTEASFALNDTSALLKKRKLDLPAETAVKRQKKAEELFEATIARIETELPSQEQAVESVTPTGVEAPLNGLPDADVKAEPAEDKETEDSRLPTPIPDNTKPKKKAKAKKKSKKQIFEEREALKKQQQETFEREALRAAGIEDIEGTPDAEAKSQVGEPEPVPEPELETKGEALEAPETESKPDLDPELYPSEVVDALVLPKDFNLDIGTLKLVPFHGEDGPDAQRLQRKFGTAKLDCDAELWLWRRNRIRQLNSEDGSVDKPVGIGGYYVPNPTGCARTEGVKKILNSEKSKYLPHHIKVKKAREEREKNAKNGNTNSVAAAAEAARLAADSLVAKGNSRANRVNNRRYVAEINDQRKNFGQDSDVLRFNQLKKRKKPVKFARSAIHNWGLYAMENINKDDMIIEYVGEEVRQQIAELREARYLKSGIGSSYLFRIDDNTVIDATKKGGIARFINHSCMPNCTAKIIKVEGSKRIVIYALRDIAQNEELTYDYKFEREIGSTDRIPCLCGTAACKGFLN.

6 disordered regions span residues Met1–Arg205, Lys400–His458, Gly555–Leu607, Ile667–Asp792, Glu842–Gln908, and Ala932–Leu982. The span at Ala7–Arg18 shows a compositional bias: low complexity. Residues Ala19–Arg31 are compositionally biased toward basic and acidic residues. Over residues His70–Ala80 the composition is skewed to polar residues. A compositionally biased stretch (low complexity) spans Ser105 to Thr121. 2 stretches are compositionally biased toward polar residues: residues Ser130–Leu158 and Asn174–Asp186. Residues Gly194–Ser204 show a composition bias toward basic and acidic residues. Over residues Arg559 to Leu607 the composition is skewed to basic and acidic residues. The span at Arg702 to His716 shows a compositional bias: basic residues. Residues Met758 to Thr784 show a composition bias toward basic and acidic residues. Over residues Leu843–Pro855 the composition is skewed to polar residues. The span at Ala868–Arg884 shows a compositional bias: basic and acidic residues. Residues Pro895 to Lys907 show a composition bias toward basic residues. A compositionally biased stretch (basic and acidic residues) spans Leu960–Leu978. The RxxxRR motif motif lies at Arg1137–Arg1142. Residues Lys1171–Lys1288 enclose the SET domain. Tyr1287 contributes to the S-adenosyl-L-methionine binding site. In terms of domain architecture, Post-SET spans Asp1297–Asn1313.

The protein belongs to the class V-like SAM-binding methyltransferase superfamily. In terms of assembly, component of the Set1C/COMPASS complex.

It is found in the nucleus. Its subcellular location is the chromosome. The enzyme catalyses L-lysyl(4)-[histone H3] + 3 S-adenosyl-L-methionine = N(6),N(6),N(6)-trimethyl-L-lysyl(4)-[histone H3] + 3 S-adenosyl-L-homocysteine + 3 H(+). It catalyses the reaction N(6)-methyl-L-lysyl(4)-[histone H3] + S-adenosyl-L-methionine = N(6),N(6)-dimethyl-L-lysyl(4)-[histone H3] + S-adenosyl-L-homocysteine + H(+). It carries out the reaction N(6),N(6)-dimethyl-L-lysyl(4)-[histone H3] + S-adenosyl-L-methionine = N(6),N(6),N(6)-trimethyl-L-lysyl(4)-[histone H3] + S-adenosyl-L-homocysteine + H(+). Its function is as follows. Catalytic component of the COMPASS (Set1C) complex that specifically mono-, di- and trimethylates histone H3 to form H3K4me1/2/3. Binds RNAs which might negatively affect its histone methyltransferase activity. COMPASS recognizes ubiquitinated H2B on one face of the nucleosome which stimulates the methylation of H3 on the opposing face. This Neurospora crassa (strain ATCC 24698 / 74-OR23-1A / CBS 708.71 / DSM 1257 / FGSC 987) protein is Histone-lysine N-methyltransferase, H3 lysine-4 specific (set-1).